Reading from the N-terminus, the 446-residue chain is Thymidine phosphorylase (446 aa).

The protein belongs to the thymidine/pyrimidine-nucleoside phosphorylase family. As to quaternary structure, homodimer.

The enzyme catalyses thymidine + phosphate = 2-deoxy-alpha-D-ribose 1-phosphate + thymine. It functions in the pathway pyrimidine metabolism; dTMP biosynthesis via salvage pathway; dTMP from thymine: step 1/2. Functionally, the enzymes which catalyze the reversible phosphorolysis of pyrimidine nucleosides are involved in the degradation of these compounds and in their utilization as carbon and energy sources, or in the rescue of pyrimidine bases for nucleotide synthesis. This is Thymidine phosphorylase from Psychromonas ingrahamii (strain DSM 17664 / CCUG 51855 / 37).